A 542-amino-acid polypeptide reads, in one-letter code: CTP synthase (542 aa).

Residues 1–265 (MTRYIFVTGG…DDFVVERFGL (265 aa)) form an amidoligase domain region. Residue serine 13 coordinates CTP. Serine 13 contributes to the UTP binding site. ATP-binding positions include 14–19 (SLGKGI) and aspartate 71. Aspartate 71 and glutamate 139 together coordinate Mg(2+). CTP is bound by residues 146–148 (DIE), 186–191 (KTKPTQ), and lysine 222. UTP contacts are provided by residues 186–191 (KTKPTQ) and lysine 222. In terms of domain architecture, Glutamine amidotransferase type-1 spans 290-541 (TIAMVGKYME…VKAALAQKNK (252 aa)). Glycine 351 contributes to the L-glutamine binding site. Catalysis depends on cysteine 378, which acts as the Nucleophile; for glutamine hydrolysis. L-glutamine contacts are provided by residues 379 to 382 (LGMQ), glutamate 402, and arginine 469. Catalysis depends on residues histidine 514 and glutamate 516.

This sequence belongs to the CTP synthase family. Homotetramer.

It catalyses the reaction UTP + L-glutamine + ATP + H2O = CTP + L-glutamate + ADP + phosphate + 2 H(+). It carries out the reaction L-glutamine + H2O = L-glutamate + NH4(+). The enzyme catalyses UTP + NH4(+) + ATP = CTP + ADP + phosphate + 2 H(+). The protein operates within pyrimidine metabolism; CTP biosynthesis via de novo pathway; CTP from UDP: step 2/2. Its activity is regulated as follows. Allosterically activated by GTP, when glutamine is the substrate; GTP has no effect on the reaction when ammonia is the substrate. The allosteric effector GTP functions by stabilizing the protein conformation that binds the tetrahedral intermediate(s) formed during glutamine hydrolysis. Inhibited by the product CTP, via allosteric rather than competitive inhibition. Catalyzes the ATP-dependent amination of UTP to CTP with either L-glutamine or ammonia as the source of nitrogen. Regulates intracellular CTP levels through interactions with the four ribonucleotide triphosphates. This Pseudomonas putida (strain W619) protein is CTP synthase.